Consider the following 517-residue polypeptide: UDP-N-acetylmuramyl-tripeptide synthetase (517 aa).

Residue T48 participates in UDP-N-acetyl-alpha-D-muramoyl-L-alanyl-D-glutamate binding. An ATP-binding site is contributed by 125 to 131 (GTKGKTT). UDP-N-acetyl-alpha-D-muramoyl-L-alanyl-D-glutamate contacts are provided by residues 169-170 (TT), S196, and R204. Residue K238 is modified to N6-carboxylysine.

This sequence belongs to the MurCDEF family. MurE subfamily. Carboxylation is probably crucial for Mg(2+) binding and, consequently, for the gamma-phosphate positioning of ATP.

Its subcellular location is the cytoplasm. The protein operates within cell wall biogenesis; peptidoglycan biosynthesis. In terms of biological role, catalyzes the addition of an amino acid to the nucleotide precursor UDP-N-acetylmuramoyl-L-alanyl-D-glutamate (UMAG) in the biosynthesis of bacterial cell-wall peptidoglycan. This chain is UDP-N-acetylmuramyl-tripeptide synthetase, found in Bifidobacterium longum (strain NCC 2705).